The sequence spans 251 residues: ATP synthase subunit a 2 (251 aa).

5 helical membrane passes run 35–55 (GQVF…SLLA), 94–114 (LPFI…GSLI), 133–153 (INTT…AGLS), 198–218 (LVVA…LMAL), and 219–239 (GLFT…AYIH).

The protein belongs to the ATPase A chain family. In terms of assembly, F-type ATPases have 2 components, CF(1) - the catalytic core - and CF(0) - the membrane proton channel. CF(1) has five subunits: alpha(3), beta(3), gamma(1), delta(1), epsilon(1). CF(0) has four main subunits: a, b, b' and c.

Its subcellular location is the cellular thylakoid membrane. Its function is as follows. Key component of the proton channel; it plays a direct role in the translocation of protons across the membrane. This Crocosphaera subtropica (strain ATCC 51142 / BH68) (Cyanothece sp. (strain ATCC 51142)) protein is ATP synthase subunit a 2.